Reading from the N-terminus, the 471-residue chain is Retinoic acid receptor RXR-beta-A (471 aa).

Positions 1-34 (MGDSRDSRSPDSSSVSSPPSGQRSPPLAPSAAAM) are disordered. The modulating stretch occupies residues 1-102 (MGDSRDSRSP…HAVSSSDDVK (102 aa)). The segment covering 10–25 (PDSSSVSSPPSGQRSP) has biased composition (low complexity). Residues 122–197 (KRLCAICGDR…MGMKREVVQD (76 aa)) constitute a DNA-binding region (nuclear receptor). 2 NR C4-type zinc fingers span residues 125–145 (CAIC…CEGC) and 161–185 (CRDN…YQKC). Positions 196–216 (QDERQRSVQEERQRNKERDGE) are enriched in basic and acidic residues. A disordered region spans residues 196–226 (QDERQRSVQEERQRNKERDGEVESSSAANEE). The hinge stretch occupies residues 198–221 (ERQRSVQEERQRNKERDGEVESSS). The NR LBD domain occupies 224–467 (NEEMPVEKIL…TFLMEMLEAP (244 aa)).

This sequence belongs to the nuclear hormone receptor family. NR2 subfamily. Homodimer. Heterodimer; with a rar molecule. Binds DNA preferentially as a rar/rxr heterodimer. Heterodimerizes with rarga. As to expression, shows uniform expression from the blastula to mid-gastrula stages. At 12 hours post-fertilization (hpf), expressed ubiquitously but more weakly. At 24 hpf, restricted to the ventral diencephalon, pharangeal endoderm and trunk and tail mesoderm; mesoderm expression is in medial cells of each somite along the dorsoventral axis, forming stripes. At 48 hpf, expressed in forebrain, eye, midbrain and anterior hindbrain.

It is found in the nucleus. Receptor for retinoic acid. Retinoic acid receptors bind as heterodimers to their target response elements in response to their ligands, all-trans or 9-cis retinoic acid, and regulate gene expression in various biological processes. The rar/rxr heterodimers bind to the retinoic acid response elements (RARE) composed of tandem 5'-AGGTCA-3' sites known as DR1-DR5. The high affinity ligand for rxrs is 9-cis retinoic acid. The polypeptide is Retinoic acid receptor RXR-beta-A (rxrba) (Danio rerio (Zebrafish)).